A 1549-amino-acid chain; its full sequence is FERM and PDZ domain-containing protein 1 (1549 aa).

The region spanning 57–135 (TVTLDKDVLL…ALSITVVRCT (79 aa)) is the PDZ domain. Residues 181–496 (NVLKVYLENG…GYYRLFVDPA (316 aa)) form the FERM domain. Disordered regions lie at residues 554 to 618 (AREE…DDLD), 717 to 738 (SHLS…PPQW), 775 to 834 (YDAA…YAKS), 913 to 1046 (STNP…RSEI), 1097 to 1174 (SLDS…EAQE), 1231 to 1257 (LSPC…DDSP), and 1321 to 1347 (PETE…AGSQ). Over residues 717–730 (SHLSDSGSESTASR) the composition is skewed to polar residues. Residues 924 to 931 (EPETMETK) are important for interaction with GPSM2. The span at 950-961 (PSNTENPVTTDG) shows a compositional bias: polar residues. Positions 962 to 980 (SSASIPHSPHHSNPGSSSP) are enriched in low complexity. The span at 1117–1130 (SGKDLGDSKGDRLD) shows a compositional bias: basic and acidic residues.

Interacts with GPSM1. Interacts with GPSM2.

It is found in the cytoplasm. The protein resides in the cytosol. The protein localises to the cell membrane. In terms of biological role, stabilizes membrane-bound GPSM1, and thereby promotes its interaction with GNAI1. This Mus musculus (Mouse) protein is FERM and PDZ domain-containing protein 1 (Frmpd1).